We begin with the raw amino-acid sequence, 655 residues long: A-type voltage-gated potassium channel KCND3 (655 aa).

Topologically, residues 1–182 (MAAGVAAWLP…FENPHTSTLA (182 aa)) are cytoplasmic. Interaction with KCNIP1 stretches follow at residues 6–21 (AAWLPFARAAAIGWMP) and 70–78 (EKEFFFNED). Positions 104, 110, 131, and 132 each coordinate Zn(2+). Ser153 is subject to Phosphoserine. Residues 183–204 (LVFYYVTGFFIAVSVITNVVET) traverse the membrane as a helical segment. At 205–223 (VPCGTVPGSKELPCGERYS) the chain is on the extracellular side. Residues 224–246 (VAFFCLDTACVMIFTVEYLLRLF) traverse the membrane as a helical segment. Residues 247 to 253 (AAPSRYR) are Cytoplasmic-facing. Residues 254–277 (FIRSVMSIIDVVAIMPYYIGLVMT) traverse the membrane as a helical segment. The Extracellular portion of the chain corresponds to 278–283 (NNEDVS). Residues 284–306 (GAFVTLRVFRVFRIFKFSRHSQG) traverse the membrane as a helical; Voltage-sensor segment. Topologically, residues 307–318 (LRILGYTLKSCA) are cytoplasmic. The helical transmembrane segment at 319–343 (SELGFLLFSLTMAIIIFATVMFYAE) threads the bilayer. At 344–352 (KGSSASKFT) the chain is on the extracellular side. The segment at residues 353-366 (SIPASFWYTIVTMT) is an intramembrane region (helical). Thr367, Leu368, Gly369, and Tyr370 together coordinate K(+). The Selectivity filter motif lies at 367-372 (TLGYGD). The stretch at 367-374 (TLGYGDMV) is an intramembrane region. The chain crosses the membrane as a helical span at residues 378-400 (IAGKIFGSICSLSGVLVIALPVP). Topologically, residues 401–655 (VIVSNFSRIY…TSNVVKVSVL (255 aa)) are cytoplasmic. Position 459 is a phosphothreonine (Thr459). The tract at residues 470-487 (SLIESQHHHLLHCLEKTT) is interaction with KCNIP1 and KCNIP2. The interval 474 to 489 (SQHHHLLHCLEKTTGL) is mediates dendritic targeting. A disordered region spans residues 523–565 (SSMQNYPSTRSPSLSSHSGLTTTCCSRRSKKTTHLPNSNLPAT). Low complexity predominate over residues 529 to 548 (PSTRSPSLSSHSGLTTTCCS). Position 569 is a phosphoserine; by CaMK2D (Ser569). Ser585 is modified (phosphoserine). The tract at residues 616–647 (SIPTPPALTPEGESRPPPASPGPNTNIPSITS) is disordered. A compositionally biased stretch (polar residues) spans 637–647 (GPNTNIPSITS).

Belongs to the potassium channel family. D (Shal) (TC 1.A.1.2) subfamily. Kv4.3/KCND3 sub-subfamily. Homotetramer. Heterotetramer with KCND2. Associates with the regulatory subunits KCNIP3 and KCNIP4. Interacts with KCNE1, KCNE2, SCN1B and KCNAB1 and DLG1. Component of heteromultimeric potassium channels. Identified in potassium channel complexes containing KCND1, KCND2, KCND3, KCNIP1, KCNIP2, KCNIP3, KCNIP4, DPP6 and DPP10. Interacts with KCNIP1; each KCNIP1 monomer interacts with two adjacent KCND3 subunits, through both the N-terminal inactivation ball of a KCND3 subunit and a C-terminal helix from the adjacent KCND3 subunit, clamping them together; this interaction stabilizes the tetrameric form and modulates the channel gating kinetics namely channel activation and inactivation kinetics and rate of recovery from inactivation. Interacts with DPP6; this interaction modulates the channel gating kinetics namely channel activation and inactivation kinetics and rate of recovery from inactivation. Interacts with KCNIP2; each KCNIP2 monomer interacts with two adjacent KCND3 subunits, through both the N-terminal inactivation ball of a KCND3 subunit and a C-terminal helix from the adjacent KCND3 subunit, clamping them together; this interaction modulates the channel gating kinetics. Post-translationally, regulated through phosphorylation at Ser-569 by CaMK2D. In terms of tissue distribution, highly expressed in brain, in particular in the retrosplenial cortex, medial habenula, anterior thalamus, hippocampus, cerebellum and lateral geniculate and superior colliculus. Highly expressed in heart atrium (at protein level) and throughout the ventricle wall, in lung and vas deferens.

It localises to the cell membrane. It is found in the sarcolemma. Its subcellular location is the cell projection. The protein resides in the dendrite. The enzyme catalyses K(+)(in) = K(+)(out). In terms of biological role, pore-forming (alpha) subunit of voltage-gated A-type potassium channels that mediates transmembrane potassium transport in excitable membranes, in brain and heart. In cardiomyocytes, may generate the transient outward potassium current I(To). In neurons, may conduct the transient subthreshold somatodendritic A-type potassium current (ISA). Kinetics properties are characterized by fast activation at subthreshold membrane potentials, rapid inactivation, and quick recovery from inactivation. Channel properties are modulated by interactions with regulatory subunits. Interaction with the regulatory subunits KCNIP1 or KCNIP2 modulates the channel gating kinetics namely channel activation and inactivation kinetics and rate of recovery from inactivation. Likewise, interaction with DPP6 modulates the channel gating kinetics namely channel activation and inactivation kinetics. In Rattus norvegicus (Rat), this protein is A-type voltage-gated potassium channel KCND3.